We begin with the raw amino-acid sequence, 77 residues long: Acyl carrier protein (77 aa).

The Carrier domain occupies 1–76; sequence MSIEERVKKI…SAIDYVTKAN (76 aa). Ser-36 bears the O-(pantetheine 4'-phosphoryl)serine mark.

The protein belongs to the acyl carrier protein (ACP) family. 4'-phosphopantetheine is transferred from CoA to a specific serine of apo-ACP by AcpS. This modification is essential for activity because fatty acids are bound in thioester linkage to the sulfhydryl of the prosthetic group.

The protein localises to the cytoplasm. It functions in the pathway lipid metabolism; fatty acid biosynthesis. In terms of biological role, carrier of the growing fatty acid chain in fatty acid biosynthesis. This is Acyl carrier protein from Actinobacillus pleuropneumoniae serotype 5b (strain L20).